The primary structure comprises 386 residues: MKIHEYQGKEILRSFGVPVPRGIPAFTVQEAVEAAQKLGGPVWVVKAQIHAGGRGKGGGVKVAKTIDDVKARASEILGMQLVTHQTGPEGQKVRRLYIEDGADIKNELYVSLVTDRGTQKVALIASSEGGMDIEEVAHSTPEKIITEMIDPLTGITPEQSKKVAAAIGLTGASVDQAVDLFAKLYKCYMDTDASLVEINPLNCDSKGNLMALDAKFNFDANALFRHPEIVALRDLDEEDPAEVEASKFDLAYISLDGNIGCLVNGAGLAMATMDTIKLFGGEPANFLDVGGGATPEKVTEAFKIMLKNPKVKGILVNIFGGIMKCDTIATGVITACKAVNLQVPLVVRMKGTNEELGKKMLAESGLPIISADTMAEAATKIVEAVR.

The 236-residue stretch at 9 to 244 folds into the ATP-grasp domain; the sequence is KEILRSFGVP…LDEEDPAEVE (236 aa). Residues K46, 53–55, E99, A102, and E107 contribute to the ATP site; that span reads GRG. Mg(2+) contacts are provided by N199 and D213. Substrate contacts are provided by residues N264 and 321–323; that span reads GIM.

Belongs to the succinate/malate CoA ligase beta subunit family. As to quaternary structure, heterotetramer of two alpha and two beta subunits. Requires Mg(2+) as cofactor.

It carries out the reaction succinate + ATP + CoA = succinyl-CoA + ADP + phosphate. The enzyme catalyses GTP + succinate + CoA = succinyl-CoA + GDP + phosphate. Its pathway is carbohydrate metabolism; tricarboxylic acid cycle; succinate from succinyl-CoA (ligase route): step 1/1. Succinyl-CoA synthetase functions in the citric acid cycle (TCA), coupling the hydrolysis of succinyl-CoA to the synthesis of either ATP or GTP and thus represents the only step of substrate-level phosphorylation in the TCA. The beta subunit provides nucleotide specificity of the enzyme and binds the substrate succinate, while the binding sites for coenzyme A and phosphate are found in the alpha subunit. The protein is Succinate--CoA ligase [ADP-forming] subunit beta of Acidovorax ebreus (strain TPSY) (Diaphorobacter sp. (strain TPSY)).